Consider the following 206-residue polypeptide: Ribonuclease HII (206 aa).

One can recognise an RNase H type-2 domain in the interval 18-206; it reads GRVAGVDEVG…PVREWLEANS (189 aa). 3 residues coordinate a divalent metal cation: aspartate 24, glutamate 25, and aspartate 116.

The protein belongs to the RNase HII family. The cofactor is Mn(2+). Requires Mg(2+) as cofactor.

Its subcellular location is the cytoplasm. It carries out the reaction Endonucleolytic cleavage to 5'-phosphomonoester.. Its function is as follows. Endonuclease that specifically degrades the RNA of RNA-DNA hybrids. This is Ribonuclease HII from Shewanella amazonensis (strain ATCC BAA-1098 / SB2B).